Consider the following 362-residue polypeptide: tRNA-specific 2-thiouridylase MnmA (362 aa).

Residues 8-15 (AMSGGVDS) and methionine 35 contribute to the ATP site. The tract at residues 95 to 97 (NPD) is interaction with target base in tRNA. The active-site Nucleophile is cysteine 100. A disulfide bond links cysteine 100 and cysteine 196. Residue glycine 124 coordinates ATP. The interaction with tRNA stretch occupies residues 146-148 (KDQ). Cysteine 196 acts as the Cysteine persulfide intermediate in catalysis. Residues 303–304 (RY) are interaction with tRNA.

Belongs to the MnmA/TRMU family.

The protein resides in the cytoplasm. It carries out the reaction S-sulfanyl-L-cysteinyl-[protein] + uridine(34) in tRNA + AH2 + ATP = 2-thiouridine(34) in tRNA + L-cysteinyl-[protein] + A + AMP + diphosphate + H(+). Catalyzes the 2-thiolation of uridine at the wobble position (U34) of tRNA, leading to the formation of s(2)U34. This Chlamydia abortus (strain DSM 27085 / S26/3) (Chlamydophila abortus) protein is tRNA-specific 2-thiouridylase MnmA.